Here is a 400-residue protein sequence, read N- to C-terminus: Acetate kinase (400 aa).

Mg(2+) is bound at residue Asn7. An ATP-binding site is contributed by Lys14. Residue Arg91 participates in substrate binding. Catalysis depends on Asp148, which acts as the Proton donor/acceptor. ATP is bound by residues 208–212, 283–285, and 331–335; these read HVGNG, DMR, and GVGEN. Glu385 serves as a coordination point for Mg(2+).

This sequence belongs to the acetokinase family. Homodimer. It depends on Mg(2+) as a cofactor. Mn(2+) serves as cofactor.

It localises to the cytoplasm. The catalysed reaction is acetate + ATP = acetyl phosphate + ADP. It participates in metabolic intermediate biosynthesis; acetyl-CoA biosynthesis; acetyl-CoA from acetate: step 1/2. In terms of biological role, catalyzes the formation of acetyl phosphate from acetate and ATP. Can also catalyze the reverse reaction. The polypeptide is Acetate kinase (Parabacteroides distasonis (strain ATCC 8503 / DSM 20701 / CIP 104284 / JCM 5825 / NCTC 11152)).